Reading from the N-terminus, the 484-residue chain is Replication-associated protein (484 aa).

Residues 146-153 (IRKYHQSV) carry the Nuclear localization signal motif.

The protein resides in the host nucleus. Its function is as follows. Plays an essential for the replication of viral DNA. Presumably cleaves viral genomic dsRNA replicative form to initiate rolling circle replication. This chain is Replication-associated protein, found in Chaetoceros (Chaetoceros sp. DNA virus 7).